The primary structure comprises 345 residues: S-adenosylmethionine:tRNA ribosyltransferase-isomerase (345 aa).

This sequence belongs to the QueA family. Monomer.

The protein resides in the cytoplasm. It carries out the reaction 7-aminomethyl-7-carbaguanosine(34) in tRNA + S-adenosyl-L-methionine = epoxyqueuosine(34) in tRNA + adenine + L-methionine + 2 H(+). It participates in tRNA modification; tRNA-queuosine biosynthesis. Functionally, transfers and isomerizes the ribose moiety from AdoMet to the 7-aminomethyl group of 7-deazaguanine (preQ1-tRNA) to give epoxyqueuosine (oQ-tRNA). The polypeptide is S-adenosylmethionine:tRNA ribosyltransferase-isomerase (Acinetobacter baumannii (strain ATCC 17978 / DSM 105126 / CIP 53.77 / LMG 1025 / NCDC KC755 / 5377)).